A 520-amino-acid polypeptide reads, in one-letter code: Cytochrome P450 716A67 (520 aa).

The helical transmembrane segment at 4–24 (SLAIYYGIILITVTLGLVYTW) threads the bilayer. Position 466 (Cys466) interacts with heme.

It belongs to the cytochrome P450 family. Requires heme as cofactor.

The protein resides in the membrane. Catalyzes hydroxylation at the C-2 position of different intermediates of the hemolytic sapogenin biosynthetic pathway downstream of oleanolic acid synthesis. This Medicago truncatula (Barrel medic) protein is Cytochrome P450 716A67.